The chain runs to 597 residues: uncharacterized protein (597 aa).

Disordered stretches follow at residues 165–197 (NSRAVPPPAPPNPPKMEKHMSHDTSGRGSIFSK) and 278–344 (ERSS…RGTL). Pro residues predominate over residues 169-178 (VPPPAPPNPP). Over residues 179 to 189 (KMEKHMSHDTS) the composition is skewed to basic and acidic residues. Residues 293 to 313 (STEVSITSSSPSPSSSSSTST) are compositionally biased toward low complexity. In terms of domain architecture, SAM spans 402 to 465 (WSLDDVLLWL…LDDLSKIIEN (64 aa)). The interval 576 to 597 (EESQQKESSSSGISSSPQTPTE) is disordered. Low complexity predominate over residues 581 to 597 (KESSSSGISSSPQTPTE).

This is an uncharacterized protein from Caenorhabditis elegans.